A 349-amino-acid polypeptide reads, in one-letter code: Protein-glutamate methylesterase/protein-glutamine glutaminase (349 aa).

The region spanning 2 to 118 is the Response regulatory domain; it reads RVLVVDDSAL…VDLSSVAQEL (117 aa). Asp52 is subject to 4-aspartylphosphate. Residues 159 to 345 form the CheB-type methylesterase domain; it reads VLIGSSTGGP…EEIVRFLEVK (187 aa). Residues Ser164, His191, and Asp287 contribute to the active site.

Belongs to the CheB family. In terms of processing, phosphorylated by CheA. Phosphorylation of the N-terminal regulatory domain activates the methylesterase activity.

The protein localises to the cytoplasm. It carries out the reaction [protein]-L-glutamate 5-O-methyl ester + H2O = L-glutamyl-[protein] + methanol + H(+). The catalysed reaction is L-glutaminyl-[protein] + H2O = L-glutamyl-[protein] + NH4(+). In terms of biological role, involved in chemotaxis. Part of a chemotaxis signal transduction system that modulates chemotaxis in response to various stimuli. Catalyzes the demethylation of specific methylglutamate residues introduced into the chemoreceptors (methyl-accepting chemotaxis proteins or MCP) by CheR. Also mediates the irreversible deamidation of specific glutamine residues to glutamic acid. The sequence is that of Protein-glutamate methylesterase/protein-glutamine glutaminase from Archaeoglobus fulgidus (strain ATCC 49558 / DSM 4304 / JCM 9628 / NBRC 100126 / VC-16).